The primary structure comprises 484 residues: MAQLNTNFINHIEKELPAHLSLQEFIAYCDKPLRKSIRVNTLKISTAQFVHIMTSAGWQLSPVPWCADGFWIEGKDDIQLGNAIEHIQGLFYIQEASSMLPPTALFSNDNTAEIVLDVASAPGSKATQIAALMNNSGLLVANEYSASRVKVLHANVLRMGASHTALTHFDGRVYGEYLYESFDAILLDAPCGGEGTVRKDPLALKHWDIDDVTAIGETQKDLIESAFLALKPGGILVYSTCTLSQLENQHICYHLQQTYPDAVEFESLAELFDGADKACTEEGFLHVWPQIYDSEGFFVAKIRKKASVERVKKQPKLQKNFPFNPANEKQKAELTQYFYDSFCLELPSDDVIMLRDDEYWLFPAQFMPFIGKMRFQRIGIKLADAMKKGYKAKHEAVIALSAATHNPAKTMELSAAQAQDFLMGRDIATSTFDQPTQQQLAIMPQGEMLVSYHKVVLGVVKHLGHRLKNNLPRDLVRDNVNLYL.

Residues 119 to 125 (ASAPGSK), Glu-143, Asp-170, and Asp-188 each bind S-adenosyl-L-methionine. Catalysis depends on Cys-241, which acts as the Nucleophile.

It belongs to the class I-like SAM-binding methyltransferase superfamily. RsmB/NOP family.

It is found in the cytoplasm. The catalysed reaction is cytidine(1407) in 16S rRNA + S-adenosyl-L-methionine = 5-methylcytidine(1407) in 16S rRNA + S-adenosyl-L-homocysteine + H(+). Specifically methylates the cytosine at position 1407 (m5C1407) of 16S rRNA. The polypeptide is Ribosomal RNA small subunit methyltransferase F (Shewanella frigidimarina (strain NCIMB 400)).